The sequence spans 163 residues: Developmental pluripotency-associated protein 3 (163 aa).

In terms of tissue distribution, preferentially expressed in oocyte.

The protein resides in the nucleus. It localises to the cytoplasm. In terms of biological role, primordial germ cell (PGCs)-specific protein involved in epigenetic chromatin reprogramming in the zygote following fertilization. In zygotes, DNA demethylation occurs selectively in the paternal pronucleus before the first cell division, while the adjacent maternal pronucleus and certain paternally-imprinted loci are protected from this process. Participates in protection of DNA methylation in the maternal pronucleus by preventing conversion of 5mC to 5hmC: specifically recognizes and binds histone H3 dimethylated at 'Lys-9' (H3K9me2) on maternal genome, and protects maternal genome from TET3-mediated conversion to 5hmC and subsequent DNA demethylation. Does not bind paternal chromatin, which is mainly packed into protamine and does not contain much H3K9me2 mark. Also protects imprinted loci that are marked with H3K9me2 in mature sperm from DNA demethylation in early embryogenesis. May be important for the totipotent/pluripotent states continuing through preimplantation development. Also involved in chromatin condensation in oocytogenesis. The sequence is that of Developmental pluripotency-associated protein 3 (DPPA3) from Bos taurus (Bovine).